The primary structure comprises 376 residues: uncharacterized protein (376 aa).

The next 2 helical transmembrane spans lie at 153–173 (QGTLIKFQQILVCLAIIVLFA) and 188–208 (HRPFLIDFFTINAIFTVLAVY).

The protein resides in the membrane. This is an uncharacterized protein from Saccharomyces cerevisiae (strain ATCC 204508 / S288c) (Baker's yeast).